Here is a 631-residue protein sequence, read N- to C-terminus: Tail sheath protein (631 aa).

This sequence belongs to the myoviridae tail sheath protein family. As to quaternary structure, homomultimer.

Its subcellular location is the virion. The protein resides in the host cytoplasm. Its function is as follows. Polymerizes as an extended structure around the baseplate-tail tube complex. During ejection, the sheath shifts to a contracted form, thereby making the inner tail tube protrude through the host cell envelope. The polypeptide is Tail sheath protein (Salmonella typhi).